The chain runs to 29 residues: Cycloviolacin-O15 (29 aa).

Residues 1–29 constitute a cross-link (cyclopeptide (Gly-Asn)); that stretch reads GLVPCGETCFTGKCYTPGCSCSYPICKKN. Disulfide bonds link Cys-5–Cys-19, Cys-9–Cys-21, and Cys-14–Cys-26.

In terms of processing, this is a cyclic peptide.

Probably participates in a plant defense mechanism. Has hemolytic activity. The sequence is that of Cycloviolacin-O15 from Viola odorata (Sweet violet).